A 397-amino-acid polypeptide reads, in one-letter code: 1-deoxy-D-xylulose 5-phosphate reductoisomerase (397 aa).

8 residues coordinate NADPH: T10, G11, S12, I13, G36, K37, N38, and N124. Residue K125 coordinates 1-deoxy-D-xylulose 5-phosphate. E126 lines the NADPH pocket. D150 serves as a coordination point for Mn(2+). 4 residues coordinate 1-deoxy-D-xylulose 5-phosphate: S151, E152, S186, and H209. E152 serves as a coordination point for Mn(2+). Position 215 (G215) interacts with NADPH. Residues S222, N227, K228, and E231 each contribute to the 1-deoxy-D-xylulose 5-phosphate site. E231 contributes to the Mn(2+) binding site.

The protein belongs to the DXR family. Homodimer. Mg(2+) is required as a cofactor. Requires Mn(2+) as cofactor.

The enzyme catalyses 2-C-methyl-D-erythritol 4-phosphate + NADP(+) = 1-deoxy-D-xylulose 5-phosphate + NADPH + H(+). It functions in the pathway isoprenoid biosynthesis; isopentenyl diphosphate biosynthesis via DXP pathway; isopentenyl diphosphate from 1-deoxy-D-xylulose 5-phosphate: step 1/6. Its function is as follows. Catalyzes the NADPH-dependent rearrangement and reduction of 1-deoxy-D-xylulose-5-phosphate (DXP) to 2-C-methyl-D-erythritol 4-phosphate (MEP). In Proteus mirabilis (strain HI4320), this protein is 1-deoxy-D-xylulose 5-phosphate reductoisomerase.